We begin with the raw amino-acid sequence, 236 residues long: uncharacterized protein (236 aa).

The interval 186-236 (HGRGDTRNLNDITGLGHERERDRENTHYEKKPKLDSDSEVDIRSFRQDMDL) is disordered. Over residues 201–236 (GHERERDRENTHYEKKPKLDSDSEVDIRSFRQDMDL) the composition is skewed to basic and acidic residues. Position 221 is a phosphoserine (serine 221).

This is an uncharacterized protein from Saccharomyces cerevisiae (strain ATCC 204508 / S288c) (Baker's yeast).